Consider the following 166-residue polypeptide: Protein-export protein SecB (166 aa).

The span at 1 to 16 (MTDTSAAGNPTPGQQP) shows a compositional bias: polar residues. The disordered stretch occupies residues 1–21 (MTDTSAAGNPTPGQQPANPPS).

It belongs to the SecB family. As to quaternary structure, homotetramer, a dimer of dimers. One homotetramer interacts with 1 SecA dimer.

It localises to the cytoplasm. In terms of biological role, one of the proteins required for the normal export of preproteins out of the cell cytoplasm. It is a molecular chaperone that binds to a subset of precursor proteins, maintaining them in a translocation-competent state. It also specifically binds to its receptor SecA. This Hyphomonas neptunium (strain ATCC 15444) protein is Protein-export protein SecB.